The sequence spans 270 residues: Putative pyruvate, phosphate dikinase regulatory protein (270 aa).

147-154 serves as a coordination point for ADP; it reads GVSRSSKT.

It belongs to the pyruvate, phosphate/water dikinase regulatory protein family. PDRP subfamily.

The enzyme catalyses N(tele)-phospho-L-histidyl/L-threonyl-[pyruvate, phosphate dikinase] + ADP = N(tele)-phospho-L-histidyl/O-phospho-L-threonyl-[pyruvate, phosphate dikinase] + AMP + H(+). It catalyses the reaction N(tele)-phospho-L-histidyl/O-phospho-L-threonyl-[pyruvate, phosphate dikinase] + phosphate + H(+) = N(tele)-phospho-L-histidyl/L-threonyl-[pyruvate, phosphate dikinase] + diphosphate. Its function is as follows. Bifunctional serine/threonine kinase and phosphorylase involved in the regulation of the pyruvate, phosphate dikinase (PPDK) by catalyzing its phosphorylation/dephosphorylation. The polypeptide is Putative pyruvate, phosphate dikinase regulatory protein (Citrifermentans bemidjiense (strain ATCC BAA-1014 / DSM 16622 / JCM 12645 / Bem) (Geobacter bemidjiensis)).